The following is a 53-amino-acid chain: UPF0391 membrane protein ESA_03375 (53 aa).

2 helical membrane passes run W4–A24 and A28–M48.

Belongs to the UPF0391 family.

Its subcellular location is the cell membrane. This Cronobacter sakazakii (strain ATCC BAA-894) (Enterobacter sakazakii) protein is UPF0391 membrane protein ESA_03375.